A 465-amino-acid chain; its full sequence is MAKTLYQKVFDAHVVREVEGETPLIYIDRHLVHEVTSPQAFDGLRAMNRQLRRPDLTWATMDHNVSTTTKDIAASGEMARIQMETLAANCKEFGVRLYDLNHKYQGIVHVMGPELGITLPGTTIVCGDSHTATHGAFGSLAFGIGTSEVEHVMATQTLKQGRAKTMRISVNGKLAAGISAKDVVLAIIGRVGHAGGTGYVVEFAGEAIEGLTMEGRMTVCNMAIELGAKAGMIAPDQTTIDYIRGKEFAPKGETLEQAIAYWQSLKSDEGARFDAEVVLDAADIAPQVTWGTNPGQVIAVNEPIPAPESFSDLMEQQSARKALAYMDLQPGQKLSDVAIDKVFIGSCTNSRIEDLRAAAAIARGRKVAAGVQALVVPGSEQVKAQAEAEGLDKIFIEAGFEWRLPGCSMCLAMNNDRLQPGERCASTSNRNFEGRQGRAGRTHLVSPAMAAAAAVTGRFADIRAL.

[4Fe-4S] cluster-binding residues include Cys-347, Cys-407, and Cys-410.

It belongs to the aconitase/IPM isomerase family. LeuC type 1 subfamily. Heterodimer of LeuC and LeuD. [4Fe-4S] cluster serves as cofactor.

It catalyses the reaction (2R,3S)-3-isopropylmalate = (2S)-2-isopropylmalate. It functions in the pathway amino-acid biosynthesis; L-leucine biosynthesis; L-leucine from 3-methyl-2-oxobutanoate: step 2/4. In terms of biological role, catalyzes the isomerization between 2-isopropylmalate and 3-isopropylmalate, via the formation of 2-isopropylmaleate. This Aeromonas hydrophila subsp. hydrophila (strain ATCC 7966 / DSM 30187 / BCRC 13018 / CCUG 14551 / JCM 1027 / KCTC 2358 / NCIMB 9240 / NCTC 8049) protein is 3-isopropylmalate dehydratase large subunit.